The primary structure comprises 300 residues: Tyrosine recombinase XerC (300 aa).

A Core-binding (CB) domain is found at 2 to 88 (IQEGKLEQQF…SLRSFYTFLL (87 aa)). In terms of domain architecture, Tyr recombinase spans 109 to 294 (RLPKFFYSEE…TKEHLKSTYM (186 aa)). Residues arginine 150, lysine 174, histidine 246, arginine 249, and histidine 272 contribute to the active site. The active-site O-(3'-phospho-DNA)-tyrosine intermediate is the tyrosine 281.

Belongs to the 'phage' integrase family. XerC subfamily. In terms of assembly, forms a cyclic heterotetrameric complex composed of two molecules of XerC and two molecules of XerD.

The protein localises to the cytoplasm. Its function is as follows. Site-specific tyrosine recombinase, which acts by catalyzing the cutting and rejoining of the recombining DNA molecules. The XerC-XerD complex is essential to convert dimers of the bacterial chromosome into monomers to permit their segregation at cell division. It also contributes to the segregational stability of plasmids. This Listeria monocytogenes serovar 1/2a (strain ATCC BAA-679 / EGD-e) protein is Tyrosine recombinase XerC.